The following is a 79-amino-acid chain: Small ribosomal subunit protein bS18 (79 aa).

Belongs to the bacterial ribosomal protein bS18 family. In terms of assembly, part of the 30S ribosomal subunit. Forms a tight heterodimer with protein bS6.

In terms of biological role, binds as a heterodimer with protein bS6 to the central domain of the 16S rRNA, where it helps stabilize the platform of the 30S subunit. In Streptococcus pneumoniae (strain Hungary19A-6), this protein is Small ribosomal subunit protein bS18.